The following is a 100-amino-acid chain: Small ribosomal subunit protein uS14c (100 aa).

The protein belongs to the universal ribosomal protein uS14 family. Part of the 30S ribosomal subunit.

Its subcellular location is the plastid. It is found in the chloroplast. Binds 16S rRNA, required for the assembly of 30S particles. This is Small ribosomal subunit protein uS14c from Citrus sinensis (Sweet orange).